Consider the following 149-residue polypeptide: Large ribosomal subunit protein uL11 (149 aa).

This sequence belongs to the universal ribosomal protein uL11 family. As to quaternary structure, part of the ribosomal stalk of the 50S ribosomal subunit. Interacts with L10 and the large rRNA to form the base of the stalk. L10 forms an elongated spine to which L12 dimers bind in a sequential fashion forming a multimeric L10(L12)X complex. In terms of processing, one or more lysine residues are methylated.

Its function is as follows. Forms part of the ribosomal stalk which helps the ribosome interact with GTP-bound translation factors. The polypeptide is Large ribosomal subunit protein uL11 (Xanthobacter autotrophicus (strain ATCC BAA-1158 / Py2)).